The sequence spans 240 residues: 2,3,4,5-tetrahydropyridine-2,6-dicarboxylate N-acetyltransferase (240 aa).

The protein belongs to the transferase hexapeptide repeat family. DapH subfamily.

The catalysed reaction is (S)-2,3,4,5-tetrahydrodipicolinate + acetyl-CoA + H2O = L-2-acetamido-6-oxoheptanedioate + CoA. Its pathway is amino-acid biosynthesis; L-lysine biosynthesis via DAP pathway; LL-2,6-diaminopimelate from (S)-tetrahydrodipicolinate (acetylase route): step 1/3. Catalyzes the transfer of an acetyl group from acetyl-CoA to tetrahydrodipicolinate. The polypeptide is 2,3,4,5-tetrahydropyridine-2,6-dicarboxylate N-acetyltransferase (Bacillus anthracis (strain A0248)).